Consider the following 506-residue polypeptide: COP9 signalosome complex subunit 2 (506 aa).

The region spanning Ser-252–Asp-420 is the PCI domain. Residues Ser-482–Lys-491 are compositionally biased toward basic residues. Residues Ser-482 to Phe-506 form a disordered region. Over residues Gly-492–Phe-506 the composition is skewed to gly residues.

It belongs to the CSN2 family. In terms of assembly, component of the COP9 signalosome (CSN) complex.

It localises to the cytoplasm. The protein resides in the nucleus. Its function is as follows. Component of the COP9 signalosome (CSN) complex that acts as an regulator of the ubiquitin (Ubl) conjugation pathway by mediating the deneddylation of the cullin subunit of SCF-type E3 ubiquitin-protein ligase complexes. The CSN complex seems to link protein degradation to sexual development. Required for fruit body formation. The protein is COP9 signalosome complex subunit 2 (csnB) of Emericella nidulans (strain FGSC A4 / ATCC 38163 / CBS 112.46 / NRRL 194 / M139) (Aspergillus nidulans).